We begin with the raw amino-acid sequence, 141 residues long: Large ribosomal subunit protein uL11 (141 aa).

The protein belongs to the universal ribosomal protein uL11 family. Part of the ribosomal stalk of the 50S ribosomal subunit. Interacts with L10 and the large rRNA to form the base of the stalk. L10 forms an elongated spine to which L12 dimers bind in a sequential fashion forming a multimeric L10(L12)X complex. Post-translationally, one or more lysine residues are methylated.

In terms of biological role, forms part of the ribosomal stalk which helps the ribosome interact with GTP-bound translation factors. This chain is Large ribosomal subunit protein uL11, found in Chlamydia muridarum (strain MoPn / Nigg).